An 837-amino-acid chain; its full sequence is Tuftelin-interacting protein 11 (837 aa).

Basic and acidic residues-rich tracts occupy residues 1–13 (MSLSHLYRDGEGR) and 53–64 (VWAERDSDDERP). Disordered stretches follow at residues 1 to 21 (MSLSHLYRDGEGRIDDDDDER), 53 to 72 (VWAERDSDDERPSFGGKRAR), and 85 to 133 (LKKG…KGFA). The required for interaction with DHX15 stretch occupies residues 1–50 (MSLSHLYRDGEGRIDDDDDERENFEITDWDLQNEFNPNRQRHWQTKEEAT). S2, S59, and S98 each carry phosphoserine. Over residues 91–102 (EEAELEDSDDEE) the composition is skewed to acidic residues. A compositionally biased stretch (basic and acidic residues) spans 103 to 116 (KPVKQDDFPKDFGP). S144 carries the phosphoserine modification. In terms of domain architecture, G-patch spans 149–195 (TKGIGQKLLQKMGYVPGRGLGKNAQGIINPIEAKQRKGKGAVGAYGS). A disordered region spans residues 179 to 236 (IEAKQRKGKGAVGAYGSERTTQSMQDFPVVDSEEEAEEEFQKELSQWRKDPSGSKKKP). S210 is modified (phosphoserine). Residues 217-231 (EFQKELSQWRKDPSG) are compositionally biased toward basic and acidic residues. Residues 700 to 705 (VKDKFN) carry the Nuclear localization signal motif. A required for nuclear speckle localization region spans residues 710–734 (IMNRAVSSNVGAYMQPGARENIAYL).

The protein belongs to the TFP11/STIP family. In terms of assembly, identified in the spliceosome C complex. Found in the Intron Large (IL) complex, a post-mRNA release spliceosomal complex containing the excised intron, U2, U5 and U6 snRNPs, and splicing factors. Interacts with TUFT1. Interacts with DHX15; indicative for a recruitment of DHX15 to the IL complex. Interacts with GCFC2.

The protein localises to the cytoplasm. The protein resides in the nucleus. Involved in pre-mRNA splicing, specifically in spliceosome disassembly during late-stage splicing events. Intron turnover seems to proceed through reactions in two lariat-intron associated complexes termed Intron Large (IL) and Intron Small (IS). In cooperation with DHX15 seems to mediate the transition of the U2, U5 and U6 snRNP-containing IL complex to the snRNP-free IS complex leading to efficient debranching and turnover of excised introns. May play a role in the differentiation of ameloblasts and odontoblasts or in the forming of the enamel extracellular matrix. This is Tuftelin-interacting protein 11 (TFIP11) from Homo sapiens (Human).